The following is a 607-amino-acid chain: All-trans-retinol 13,14-reductase (607 aa).

The N-terminal stretch at 1–22 (MWFAVVAIFLALVAFLYRYVVG) is a signal peptide.

Belongs to the carotenoid/retinoid oxidoreductase family. CrtISO subfamily. Requires NAD(+) as cofactor. NADP(+) serves as cofactor. FAD is required as a cofactor.

The protein localises to the endoplasmic reticulum membrane. The enzyme catalyses all-trans-13,14-dihydroretinol + A = all-trans-retinol + AH2. Its function is as follows. Catalyzes the saturation of all-trans-retinol to all-trans-13,14-dihydroretinol. In addition, saturates the 7-8 double bond of all-trans-retinol to produce all-trans-7,8-dihydroretinol. Can also use vitamin A2 (all-trans-3,4-didehydroretinol) as a substrate, to produce all-trans-13,14-dihydro-3,4-didehydroretinol or all-trans-7,8-dihydro-3,4-didehydroretinol. May play a role in vitamin A metabolism. In Danio rerio (Zebrafish), this protein is All-trans-retinol 13,14-reductase.